A 91-amino-acid polypeptide reads, in one-letter code: Elongation factor 1-beta (91 aa).

The protein belongs to the EF-1-beta/EF-1-delta family.

Its function is as follows. Promotes the exchange of GDP for GTP in EF-1-alpha/GDP, thus allowing the regeneration of EF-1-alpha/GTP that could then be used to form the ternary complex EF-1-alpha/GTP/AAtRNA. In Pyrococcus horikoshii (strain ATCC 700860 / DSM 12428 / JCM 9974 / NBRC 100139 / OT-3), this protein is Elongation factor 1-beta (ef1b).